The following is a 58-amino-acid chain: Conotoxin Ar5.4 (58 aa).

The propeptide occupies 1–20; the sequence is RIQSDLIRAALEDADMKNEK.

The protein belongs to the conotoxin T superfamily. In terms of processing, contains 2 disulfide bonds that can be either 'C1-C3, C2-C4' or 'C1-C4, C2-C3', since these disulfide connectivities have been observed for conotoxins with cysteine framework V (for examples, see AC P0DQQ7 and AC P81755). In terms of tissue distribution, expressed by the venom duct.

It localises to the secreted. This Conus arenatus (Sand-dusted cone) protein is Conotoxin Ar5.4.